We begin with the raw amino-acid sequence, 1166 residues long: Poly [ADP-ribose] polymerase tankyrase-2 (1166 aa).

ANK repeat units follow at residues 23-52 (PSAR…VNSR), 57-86 (RKST…NVQA), 90-119 (GGLI…DPNA), and 123-152 (WNYT…EPTI). N203 carries the post-translational modification (3S)-3-hydroxyasparagine; by HIF1AN. ANK repeat units lie at residues 210–239 (RKST…DVHA), 243–272 (GDLV…CVNA), 276–305 (WQFT…DPTL), 363–395 (THET…NTNE), 399–428 (EFLT…KVNA), 432–461 (LGQT…DPNI), and 463–489 (SLQG…SLGH). H238 bears the (3S)-3-hydroxyhistidine; by HIF1AN mark. Position 271 is a (3S)-3-hydroxyasparagine; by HIF1AN (N271). A (3S)-3-hydroxyasparagine; by HIF1AN modification is found at N427. The residue at position 518 (N518) is a (3S)-3-hydroxyasparagine; by HIF1AN. ANK repeat units follow at residues 525 to 554 (RQST…DVHA), 558 to 587 (GGLV…VVNV), 591 to 620 (WKFT…DPTK), and 624 to 652 (DGNT…LLDA). The interval 545-553 (LLQHGADVH) is HIF1AN-binding. At H553 the chain carries (3S)-3-hydroxyhistidine; by HIF1AN. N586 bears the (3S)-3-hydroxyasparagine; by HIF1AN mark. N671, N706, and N739 each carry (3S)-3-hydroxyasparagine; by HIF1AN. ANK repeat units lie at residues 678-707 (RHST…DVNA), 711-740 (GGLI…CVNA), and 744-773 (WAFT…DPTL). In terms of domain architecture, SAM spans 873–936 (GIDFSITQFI…IKGVERLISG (64 aa)). One can recognise a PARP catalytic domain in the interval 959-1164 (SPDDKEFQSV…YQIVRPEGMV (206 aa)). Zn(2+)-binding residues include C1081, H1084, C1089, and C1092.

The protein belongs to the ARTD/PARP family. In terms of assembly, oligomerizes and associates with TNKS. Interacts with the cytoplasmic domain of LNPEP/Otase in SLC2A4/GLUT4-vesicles. Binds to the N-terminus of Grb14 and TRF1 with its ankyrin repeat region. Interacts with HIF1AN. Interacts with RNF146; this interaction leads to ubiquitination and proteasomal degradation. Interacts with NUMA1. Post-translationally, ubiquitinated by RNF146 when auto-poly-ADP-ribosylated, leading to its degradation. Deubiquitinated by USP25; leading to stabilization. ADP-ribosylated (-auto). Poly-ADP-ribosylated protein is recognized by RNF146, followed by ubiquitination.

It localises to the cytoplasm. Its subcellular location is the golgi apparatus membrane. The protein localises to the nucleus. The protein resides in the chromosome. It is found in the telomere. It catalyses the reaction NAD(+) + (ADP-D-ribosyl)n-acceptor = nicotinamide + (ADP-D-ribosyl)n+1-acceptor + H(+).. It carries out the reaction L-aspartyl-[protein] + NAD(+) = 4-O-(ADP-D-ribosyl)-L-aspartyl-[protein] + nicotinamide. The catalysed reaction is L-glutamyl-[protein] + NAD(+) = 5-O-(ADP-D-ribosyl)-L-glutamyl-[protein] + nicotinamide. In terms of biological role, poly-ADP-ribosyltransferase involved in various processes such as Wnt signaling pathway, telomere length and vesicle trafficking. Acts as an activator of the Wnt signaling pathway by mediating poly-ADP-ribosylation of AXIN1 and AXIN2, 2 key components of the beta-catenin destruction complex: poly-ADP-ribosylated target proteins are recognized by RNF146, which mediates their ubiquitination and subsequent degradation. Also mediates poly-ADP-ribosylation of BLZF1 and CASC3, followed by recruitment of RNF146 and subsequent ubiquitination. Mediates poly-ADP-ribosylation of TERF1, thereby contributing to the regulation of telomere length. Stimulates 26S proteasome activity. This chain is Poly [ADP-ribose] polymerase tankyrase-2, found in Mus musculus (Mouse).